The following is a 363-amino-acid chain: S-methylmethionine--homocysteine S-methyltransferase BHMT2 (363 aa).

The Hcy-binding domain maps to 11–305 (RGILERLESG…YHIRAIAEEL (295 aa)). Positions 208, 290, and 291 each coordinate Zn(2+). Position 321 is a phosphoserine (Ser321).

In terms of assembly, homotetramer. It depends on Zn(2+) as a cofactor.

The enzyme catalyses S-methyl-L-methionine + L-homocysteine = 2 L-methionine + H(+). Its pathway is amino-acid biosynthesis; L-methionine biosynthesis via de novo pathway; L-methionine from L-homocysteine (BhmT route): step 1/1. In terms of biological role, involved in the regulation of homocysteine metabolism. Converts betaine and homocysteine to dimethylglycine and methionine, respectively. This reaction is also required for the irreversible oxidation of choline. This is S-methylmethionine--homocysteine S-methyltransferase BHMT2 (BHMT2) from Pongo abelii (Sumatran orangutan).